The sequence spans 181 residues: 6,7-dimethyl-8-ribityllumazine synthase 2 (181 aa).

Positions 1-23 are disordered; it reads MSLPMTETVTDPAETAPPTAERS. Residues Trp-40, 74–76, 98–100, and Ser-129 contribute to the 5-amino-6-(D-ribitylamino)uracil site; these read SFE and LVV.

The protein belongs to the DMRL synthase family.

The catalysed reaction is (2S)-2-hydroxy-3-oxobutyl phosphate + 5-amino-6-(D-ribitylamino)uracil = 6,7-dimethyl-8-(1-D-ribityl)lumazine + phosphate + 2 H2O + H(+). It functions in the pathway cofactor biosynthesis; riboflavin biosynthesis; riboflavin from 2-hydroxy-3-oxobutyl phosphate and 5-amino-6-(D-ribitylamino)uracil: step 1/2. Functionally, catalyzes the formation of 6,7-dimethyl-8-ribityllumazine by condensation of 5-amino-6-(D-ribitylamino)uracil with 3,4-dihydroxy-2-butanone 4-phosphate. This is the penultimate step in the biosynthesis of riboflavin. The protein is 6,7-dimethyl-8-ribityllumazine synthase 2 of Rhodopseudomonas palustris (strain ATCC BAA-98 / CGA009).